The sequence spans 753 residues: 5-methyltetrahydropteroyltriglutamate--homocysteine methyltransferase (753 aa).

5-methyltetrahydropteroyltri-L-glutamate contacts are provided by residues Arg17–Lys20 and Lys117. L-homocysteine-binding positions include Ile431–Ser433 and Glu484. L-methionine-binding positions include Ile431 to Ser433 and Glu484. 5-methyltetrahydropteroyltri-L-glutamate is bound by residues Arg515–Cys516 and Trp561. Asp599 serves as a coordination point for L-homocysteine. Position 599 (Asp599) interacts with L-methionine. Glu605 contacts 5-methyltetrahydropteroyltri-L-glutamate. 3 residues coordinate Zn(2+): His641, Cys643, and Glu665. The Proton donor role is filled by His694. Cys726 provides a ligand contact to Zn(2+).

The protein belongs to the vitamin-B12 independent methionine synthase family. It depends on Zn(2+) as a cofactor.

It catalyses the reaction 5-methyltetrahydropteroyltri-L-glutamate + L-homocysteine = tetrahydropteroyltri-L-glutamate + L-methionine. The protein operates within amino-acid biosynthesis; L-methionine biosynthesis via de novo pathway; L-methionine from L-homocysteine (MetE route): step 1/1. In terms of biological role, catalyzes the transfer of a methyl group from 5-methyltetrahydrofolate to homocysteine resulting in methionine formation. This chain is 5-methyltetrahydropteroyltriglutamate--homocysteine methyltransferase, found in Shigella boydii serotype 18 (strain CDC 3083-94 / BS512).